The following is a 197-amino-acid chain: RILP-like protein 2 (197 aa).

The interval 1 to 24 (MEDHPVREEEDGEEDEGALAKSPL) is disordered. Over residues 8 to 17 (EEEDGEEDEG) the composition is skewed to acidic residues. One can recognise an RH1 domain in the interval 14–96 (EDEGALAKSP…KQEVEGLRKA (83 aa)). Residues 69 to 153 (VNEGSLAVEE…VQEELQCYRS (85 aa)) adopt a coiled-coil conformation. The RH2 domain occupies 119 to 184 (RPRFTLQELR…GNGEKEERTI (66 aa)).

This sequence belongs to the RILPL family. As to quaternary structure, homodimer. Interacts with RAC1. Interacts (via N-terminus) with MYO5A, the interaction is required for its role in dendrite formation. Interacts with RAB8A; interaction is dependent on the phosphorylation of RAB8A on 'Thr-72'. Interacts with RAB10 and RAB12; interaction is dependent on the phosphorylation of 'Thr-73' on RAB10 and 'Ser-105' on RAB12.

It is found in the cytoplasm. Its subcellular location is the cytosol. It localises to the cytoskeleton. The protein localises to the microtubule organizing center. The protein resides in the centrosome. It is found in the cell projection. Its subcellular location is the cilium. Involved in cell shape and neuronal morphogenesis, positively regulating the establishment and maintenance of dendritic spines. Plays a role in cellular protein transport, including protein transport away from primary cilia. May function via activation of RAC1 and PAK1. In Mus musculus (Mouse), this protein is RILP-like protein 2 (Rilpl2).